The chain runs to 496 residues: UDP-N-acetylmuramate--L-alanine ligase (496 aa).

122-128 (GTHGKTT) contacts ATP.

The protein belongs to the MurCDEF family.

The protein localises to the cytoplasm. It catalyses the reaction UDP-N-acetyl-alpha-D-muramate + L-alanine + ATP = UDP-N-acetyl-alpha-D-muramoyl-L-alanine + ADP + phosphate + H(+). It functions in the pathway cell wall biogenesis; peptidoglycan biosynthesis. In terms of biological role, cell wall formation. The chain is UDP-N-acetylmuramate--L-alanine ligase from Mycolicibacterium paratuberculosis (strain ATCC BAA-968 / K-10) (Mycobacterium paratuberculosis).